The sequence spans 158 residues: MSKVVDLVRPVVETIIDEHGDMLVDMEYVKEKGQNYLRIYVDRQPNGIDIDEIAALSELVSEKLDTIDPDPLPDPYVLELSSPGAERPIKTEADWKRALNDYVHIGLYQKIDDKKVYEGTLKYYNNDEIVLEVKDKTRRKKLTIPRKLIAKIRFAIEF.

Belongs to the RimP family.

Its subcellular location is the cytoplasm. Required for maturation of 30S ribosomal subunits. This is Ribosome maturation factor RimP from Lactobacillus helveticus (strain DPC 4571).